A 993-amino-acid polypeptide reads, in one-letter code: Vacuolar membrane protease (993 aa).

Residues 1 to 24 (MSPAMANPRVRKFNPIAFTPLPVT) are Cytoplasmic-facing. Residues 25 to 45 (LITTIVYLAVLILVLVTYLVV) traverse the membrane as a helical segment. At 46 to 391 (PPAPTLEMSP…SAFAVFRLHT (346 aa)) the chain is on the vacuolar side. 3 N-linked (GlcNAc...) asparagine glycosylation sites follow: asparagine 59, asparagine 116, and asparagine 119. Zn(2+) contacts are provided by histidine 175 and aspartate 187. The Proton acceptor role is filled by glutamate 221. Residue glutamate 222 participates in Zn(2+) binding. An N-linked (GlcNAc...) asparagine glycan is attached at asparagine 238. Residues glutamate 247 and histidine 320 each coordinate Zn(2+). Residues 392-412 (LFALSVTLLVSAPLVLFITSI) form a helical membrane-spanning segment. Residues 413–447 (ALSKTDRMYLFSMSKSLGGTSETVSLRGLRGLFRT) lie on the Cytoplasmic side of the membrane. Residues 448-468 (PIILTVTTVITIGLAYLLEKI) form a helical membrane-spanning segment. Over 469 to 475 (NPYIVHS) the chain is Vacuolar. A helical transmembrane segment spans residues 476 to 496 (SQFAVWSMMLSVWIFVAWFLA). Residues 497–509 (RVADFFRPSALHR) lie on the Cytoplasmic side of the membrane. A helical transmembrane segment spans residues 510–530 (AYSYTWIFIATWIMLVISTVY). The Vacuolar portion of the chain corresponds to 531–534 (ANQK). Residues 535–555 (GIAAGYFIFFYFAAVFLATWV) traverse the membrane as a helical segment. The Cytoplasmic portion of the chain corresponds to 556-672 (SYLELFSLPR…WSWTLPRWTW (117 aa)). The disordered stretch occupies residues 579–621 (RRSSSLSSRLLTPSADELPSDIGPNGAENLGDPDETDPTESTS). A helical transmembrane segment spans residues 673–693 (ILQLLLLAPIVIILVGQVGLL). At 694–709 (LTTAMSQIGSDGVSTF) the chain is on the vacuolar side. Residues 710–730 (IVYLACALLSTLLFAPLFPFI) traverse the membrane as a helical segment. The Cytoplasmic segment spans residues 731–737 (HRFTYHV). The helical transmembrane segment at 738–758 (PTFLLLIFIGTLIYNLVAFPF) threads the bilayer. Residues 759-993 (SPANRLKIFF…VEASHDFIIQ (235 aa)) lie on the Vacuolar side of the membrane. Asparagine 806, asparagine 847, and asparagine 955 each carry an N-linked (GlcNAc...) asparagine glycan.

It belongs to the peptidase M28 family. Zn(2+) is required as a cofactor.

The protein resides in the vacuole membrane. Its function is as follows. May be involved in vacuolar sorting and osmoregulation. In Paracoccidioides lutzii (strain ATCC MYA-826 / Pb01) (Paracoccidioides brasiliensis), this protein is Vacuolar membrane protease.